The sequence spans 547 residues: MDKSAFQKQLAALRDHRSAAPASMRQAFAADPQRFQAFTATDGDLLLDWSKCAVDATTMDLLEKLAAAADLEGRRAAMFAGKKINITEDRAVLHTALRNLSGTGVTVDGQDVKADVLSVLDAMGAFADAIRSGKALGATGKKITDIVNIGIGGSDLGPAMATLALAPYHDGPRAHYVSNIDGAHIHDTLKGLSAETTLFIVASKTFTTVETMTNAQTARDWVQKALGKQAVGKHFAAVSTALDLVAKFGIEADRVFGFWDWVGGRYSVWGAIGLPVMIAVGPRNFRAFLDGAHEMDQHFRTAPLAGNLPALLGLVGWWHRVICGYPARAVIPYDQRLSRLPAYLQQLDMESNGKGVTLDGTPVATPTGPLVWGEPGTNGQHAFFQLLHQGTDFIPVEFLAAAVGHEPELKHQHDLLLANCLAQSEALMKGRTLDEARAQMLAKGMKPADVDKIAPHRVFSGNRPSLTILYRKLDPRTFGRLIALYEHRVFVEGTLFNINSFDQWGVELGKELATGLLPVVEGKESAANRDASTRGLVERIHQLRGSE.

The Proton donor role is filled by E350. Active-site residues include H381 and K510.

Belongs to the GPI family.

It localises to the cytoplasm. It carries out the reaction alpha-D-glucose 6-phosphate = beta-D-fructose 6-phosphate. Its pathway is carbohydrate biosynthesis; gluconeogenesis. It participates in carbohydrate degradation; glycolysis; D-glyceraldehyde 3-phosphate and glycerone phosphate from D-glucose: step 2/4. Its function is as follows. Catalyzes the reversible isomerization of glucose-6-phosphate to fructose-6-phosphate. This chain is Glucose-6-phosphate isomerase, found in Mesorhizobium japonicum (strain LMG 29417 / CECT 9101 / MAFF 303099) (Mesorhizobium loti (strain MAFF 303099)).